Reading from the N-terminus, the 358-residue chain is HLA class I histocompatibility antigen, alpha chain E (358 aa).

A signal peptide spans 1–21; it reads MVDGTLLLLLSEALALTQTWA. The segment at 22–111 is alpha-1; it reads GSHSLKYFHT…LRGYYNQSEA (90 aa). Topologically, residues 22-305 are extracellular; sequence GSHSLKYFHT…KPASQPTIPI (284 aa). Positions 28, 84, 87, 98, and 105 each coordinate a peptide antigen. Residue Asn107 is glycosylated (N-linked (GlcNAc...) asparagine). An alpha-2 region spans residues 112–203; the sequence is GSHTLQWMHG…EKGKETLLHL (92 aa). The cysteines at positions 122 and 185 are disulfide-linked. A peptide antigen is bound by residues Ser164, Lys167, Gln177, Tyr180, and Tyr192. An alpha-3 region spans residues 204-295; it reads EPPKTHVTHH…GLPEPVTLRW (92 aa). The Ig-like C1-type domain occupies 206–294; the sequence is PKTHVTHHPI…EGLPEPVTLR (89 aa). A disulfide bridge connects residues Cys224 and Cys280. The connecting peptide stretch occupies residues 296–305; it reads KPASQPTIPI. A helical transmembrane segment spans residues 306-329; that stretch reads VGIIAGLVLLGSVVSGAVVAAVIW. Residues 330–358 lie on the Cytoplasmic side of the membrane; that stretch reads RKKSSGGKGGSYSKAEWSDSAQGSESHSL. Positions 333 to 358 are disordered; that stretch reads SSGGKGGSYSKAEWSDSAQGSESHSL. Residues 348–358 show a composition bias toward polar residues; the sequence is DSAQGSESHSL. The residue at position 353 (Ser353) is a Phosphoserine.

Belongs to the MHC class I family. Forms a heterotrimer with B2M and a self- or a pathogen-derived peptide (peptide-bound HLA-E-B2M). Similarly to MHC class Ia assembly, HLA-E-B2M heterodimer interacts with components of the antigen processing machinery TAPBP and TAP1-TAP2 complex; this interaction is required for peptide loading and translocation to the cell surface. Interacts with CALCR; this interaction is required for appropriate folding. The optimum binding peptide is a nonamer (VL9) that is primarily derived from amino-acid residues 3-11 of the signal sequences of most HLA-A, -B, -C and -G molecules. The VL9 peptide anchors to five main sites in the peptide-binding groove of HLA-E. Peptide-bound HLA-E-B2M complex interacts with KLRD1-KLRC1 receptor on NK cells. Binds with lower affinity to activating KLRD1-KLRC2. The common subunit KLRC1 plays a prominent role in directly interacting with HLA-E. Peptide-bound HLA-E-B2M interacts with the alpha-beta TCR on unconventional CD8+ T cells. Peptide-free HLA-E interacts with HLA-F-B2M complex; this interaction may regulate the intracellular trafficking and the stability of peptide-free MHC class I open conformers (OCs). N-glycosylated. In terms of processing, the soluble form (sHLA-E) can be partly produced by proteolytic cleavage at the cell surface (shedding) by a matrix metalloproteinase. Alternative splicing is also suggested as a mechanism for generation of sHLA-E, although it remains to be proved. Expressed in secretory endometrial cells during pregnancy (at protein level). The expression in nonlymphoid tissues is restricted to endothelial cells from all types of vessels, including arteries, veins, capillaries, and lymphatics (at protein level). In lymphoid organs, it is mainly expressed in endothelial venules, B and T cells, monocytes, macrophages, NK cells and megakaryocytes (at protein level).

Its subcellular location is the cell membrane. The protein resides in the golgi apparatus membrane. It localises to the secreted. Its function is as follows. Non-classical major histocompatibility class Ib molecule involved in immune self-nonself discrimination. In complex with B2M/beta-2-microglobulin binds nonamer self-peptides derived from the signal sequence of classical MHC class Ia molecules (VL9 peptides - VMAPRT[V/L][L/V/I/F]L). Peptide-bound HLA-E-B2M heterotrimeric complex primarily functions as a ligand for natural killer (NK) cell inhibitory receptor KLRD1-KLRC1, enabling NK cells to monitor the expression of other MHC class I molecules in healthy cells and to tolerate self. Upon cellular stress, preferentially binds signal sequence-derived peptides from stress-induced chaperones and is no longer recognized by NK cell inhibitory receptor KLRD1-KLRC1, resulting in impaired protection from NK cells. Binds signal sequence-derived peptides from non-classical MHC class Ib HLA-G molecules and acts as a ligand for NK cell activating receptor KLRD1-KLRC2, likely playing a role in the generation and effector functions of adaptive NK cells and in maternal-fetal tolerance during pregnancy. Besides self-peptides, can also bind and present pathogen-derived peptides conformationally similar to VL9 peptides to alpha-beta T cell receptor (TCR) on unconventional CD8-positive cytotoxic T cells, ultimately triggering antimicrobial immune response. Presents HIV gag peptides (immunodominant KAFSPEVIPMF and subdominant KALGPAATL epitopes) predominantly to CD8-positive T cell clones expressing a TRAV17-containing TCR, triggering HLA-E-restricted T cell responses. Presents mycobacterial peptides to HLA-E-restricted CD8-positive T cells eliciting both cytotoxic and immunoregulatory functions. In terms of biological role, (Microbial infection) Viruses like human cytomegalovirus have evolved an escape mechanism whereby virus-induced down-regulation of host MHC class I molecules is coupled to the binding of viral peptides to HLA-E, restoring HLA-E expression and inducing HLA-E-dependent NK cell immune tolerance to infected cells. Functionally, (Microbial infection) May bind HIV-1 gag/Capsid protein p24-derived peptide (AISPRTLNA) on infected cells and may inhibit NK cell cytotoxicity, a mechanism that allows HIV-1 to escape immune recognition. (Microbial infection) Upon SARS-CoV-2 infection, may contribute to functional exhaustion of cytotoxic NK cells and CD8-positive T cells. Binds SARS-CoV-2 S/Spike protein S1-derived peptide (LQPRTFLL) expressed on the surface of lung epithelial cells, inducing NK cell exhaustion and dampening of antiviral immune surveillance. In Homo sapiens (Human), this protein is HLA class I histocompatibility antigen, alpha chain E.